A 440-amino-acid polypeptide reads, in one-letter code: Gap junction alpha-8 protein (440 aa).

Residues 2-12 (GDWSFLGNILE) lie within the membrane without spanning it. Residues 13-21 (EVNEHSTVI) are Cytoplasmic-facing. A helical transmembrane segment spans residues 22–42 (GRVWLTVLFIFRILILGTAAE). At 43-71 (FVWGDEQSDFVCNTQQPGCENVCYDEAFP) the chain is on the extracellular side. Intrachain disulfides connect C54-C201, C61-C195, and C65-C190. The helical transmembrane segment at 72–92 (ISHIRLWVLQIIFVSTPSLMY) threads the bilayer. Residues 93-161 (VGHAVHHVRM…GTLLRTYVCH (69 aa)) are Cytoplasmic-facing. A disordered region spans residues 111-143 (AEELCQQSRSNGGERVPIAPDQASIRKSSSSSK). The helical transmembrane segment at 162 to 182 (IIFKTLFEVGFIVGHYFLYGF) threads the bilayer. Topologically, residues 183–210 (RILPLYRCSRWPCPNVVDCFVSRPTEKT) are extracellular. Residues 211 to 231 (IFILFMLSVAFVSLFLNIMEM) traverse the membrane as a helical segment. Residues 232–440 (SHLGMKGIRS…SRARSDDLTI (209 aa)) lie on the Cytoplasmic side of the membrane. The tract at residues 334 to 440 (GAQEVEREEQ…SRARSDDLTI (107 aa)) is disordered. Basic and acidic residues-rich tracts occupy residues 353–364 (VGEKKQEAEKVA) and 375–399 (DGEK…EKVT). The segment covering 423-432 (LSRLSKASSR) has biased composition (low complexity).

This sequence belongs to the connexin family. Alpha-type (group II) subfamily. In terms of assembly, a hemichannel or connexon is composed of a hexamer of connexins. A functional gap junction is formed by the apposition of two hemichannels. Forms heteromeric channels with GJA3. Detected in eye lens (at protein level).

The protein resides in the cell membrane. Its subcellular location is the cell junction. It localises to the gap junction. In terms of biological role, structural component of eye lens gap junctions. Gap junctions are dodecameric channels that connect the cytoplasm of adjoining cells. They are formed by the docking of two hexameric hemichannels, one from each cell membrane. Small molecules and ions diffuse from one cell to a neighboring cell via the central pore. The chain is Gap junction alpha-8 protein (Gja8) from Rattus norvegicus (Rat).